The chain runs to 140 residues: Large ribosomal subunit protein bL17 (140 aa).

The segment at 121 to 140 is disordered; the sequence is AAKGLDSGPTAEANDDDSEE.

Belongs to the bacterial ribosomal protein bL17 family. Part of the 50S ribosomal subunit. Contacts protein L32.

This is Large ribosomal subunit protein bL17 from Rhodospirillum rubrum (strain ATCC 11170 / ATH 1.1.1 / DSM 467 / LMG 4362 / NCIMB 8255 / S1).